We begin with the raw amino-acid sequence, 503 residues long: Maturase K (503 aa).

Belongs to the intron maturase 2 family. MatK subfamily.

It is found in the plastid. It localises to the chloroplast. Its function is as follows. Usually encoded in the trnK tRNA gene intron. Probably assists in splicing its own and other chloroplast group II introns. In Diospyros virginiana (American persimmon), this protein is Maturase K.